Consider the following 131-residue polypeptide: MSWKAYVDDHLCCEIDGQNLTSAAILGHDGSVWAQSPNFPQFKPEENAGIVKDFEEPGHLAPTGLFLGGTKYMVIQGEPGVVIRGKKGTGGITIKKTGMALILGIYDEPMTPGQCNLVVERLGDYLIDQGY.

The protein belongs to the profilin family. In terms of assembly, occurs in many kinds of cells as a complex with monomeric actin in a 1:1 ratio.

It localises to the cytoplasm. The protein localises to the cytoskeleton. Its function is as follows. Binds to actin and affects the structure of the cytoskeleton. At high concentrations, profilin prevents the polymerization of actin, whereas it enhances it at low concentrations. By binding to PIP2, it inhibits the formation of IP3 and DG. This is Profilin-3 (PRO3) from Triticum aestivum (Wheat).